The chain runs to 368 residues: Alanine racemase (368 aa).

K40 functions as the Proton acceptor; specific for D-alanine in the catalytic mechanism. An N6-(pyridoxal phosphate)lysine modification is found at K40. R134 contributes to the substrate binding site. The active-site Proton acceptor; specific for L-alanine is Y263. M310 is a substrate binding site.

This sequence belongs to the alanine racemase family. The cofactor is pyridoxal 5'-phosphate.

It carries out the reaction L-alanine = D-alanine. It participates in amino-acid biosynthesis; D-alanine biosynthesis; D-alanine from L-alanine: step 1/1. Its function is as follows. Catalyzes the interconversion of L-alanine and D-alanine. May also act on other amino acids. The chain is Alanine racemase (alr) from Listeria monocytogenes serotype 4b (strain F2365).